Consider the following 497-residue polypeptide: Protein nucleotidyltransferase YdiU (497 aa).

Gly92, Gly94, Arg95, Lys114, Asp126, Gly127, Arg177, and Arg184 together coordinate ATP. Asp261 acts as the Proton acceptor in catalysis. Asn262 and Asp271 together coordinate Mg(2+). Asp271 is an ATP binding site.

The protein belongs to the SELO family. Requires Mg(2+) as cofactor. Mn(2+) is required as a cofactor.

The catalysed reaction is L-seryl-[protein] + ATP = 3-O-(5'-adenylyl)-L-seryl-[protein] + diphosphate. It catalyses the reaction L-threonyl-[protein] + ATP = 3-O-(5'-adenylyl)-L-threonyl-[protein] + diphosphate. The enzyme catalyses L-tyrosyl-[protein] + ATP = O-(5'-adenylyl)-L-tyrosyl-[protein] + diphosphate. It carries out the reaction L-histidyl-[protein] + UTP = N(tele)-(5'-uridylyl)-L-histidyl-[protein] + diphosphate. The catalysed reaction is L-seryl-[protein] + UTP = O-(5'-uridylyl)-L-seryl-[protein] + diphosphate. It catalyses the reaction L-tyrosyl-[protein] + UTP = O-(5'-uridylyl)-L-tyrosyl-[protein] + diphosphate. Nucleotidyltransferase involved in the post-translational modification of proteins. It can catalyze the addition of adenosine monophosphate (AMP) or uridine monophosphate (UMP) to a protein, resulting in modifications known as AMPylation and UMPylation. This chain is Protein nucleotidyltransferase YdiU, found in Bordetella petrii (strain ATCC BAA-461 / DSM 12804 / CCUG 43448).